We begin with the raw amino-acid sequence, 275 residues long: 3-methyl-2-oxobutanoate hydroxymethyltransferase (275 aa).

Mg(2+) is bound by residues Asp-49 and Asp-88. Residues 49–50, Asp-88, and Lys-118 each bind 3-methyl-2-oxobutanoate; that span reads DS. Residue Glu-120 coordinates Mg(2+). Glu-187 functions as the Proton acceptor in the catalytic mechanism.

This sequence belongs to the PanB family. Homodecamer; pentamer of dimers. Mg(2+) is required as a cofactor.

It is found in the cytoplasm. It carries out the reaction 3-methyl-2-oxobutanoate + (6R)-5,10-methylene-5,6,7,8-tetrahydrofolate + H2O = 2-dehydropantoate + (6S)-5,6,7,8-tetrahydrofolate. It functions in the pathway cofactor biosynthesis; (R)-pantothenate biosynthesis; (R)-pantoate from 3-methyl-2-oxobutanoate: step 1/2. In terms of biological role, catalyzes the reversible reaction in which hydroxymethyl group from 5,10-methylenetetrahydrofolate is transferred onto alpha-ketoisovalerate to form ketopantoate. The protein is 3-methyl-2-oxobutanoate hydroxymethyltransferase of Bordetella petrii (strain ATCC BAA-461 / DSM 12804 / CCUG 43448).